We begin with the raw amino-acid sequence, 343 residues long: Aspartate carbamoyltransferase catalytic subunit (343 aa).

Carbamoyl phosphate-binding residues include arginine 91 and threonine 92. Lysine 119 is an L-aspartate binding site. Arginine 141, histidine 171, and glutamine 174 together coordinate carbamoyl phosphate. Residues arginine 204 and arginine 259 each coordinate L-aspartate. Residues glycine 300 and proline 301 each contribute to the carbamoyl phosphate site.

This sequence belongs to the aspartate/ornithine carbamoyltransferase superfamily. ATCase family. As to quaternary structure, heterododecamer (2C3:3R2) of six catalytic PyrB chains organized as two trimers (C3), and six regulatory PyrI chains organized as three dimers (R2).

It carries out the reaction carbamoyl phosphate + L-aspartate = N-carbamoyl-L-aspartate + phosphate + H(+). Its pathway is pyrimidine metabolism; UMP biosynthesis via de novo pathway; (S)-dihydroorotate from bicarbonate: step 2/3. Catalyzes the condensation of carbamoyl phosphate and aspartate to form carbamoyl aspartate and inorganic phosphate, the committed step in the de novo pyrimidine nucleotide biosynthesis pathway. The polypeptide is Aspartate carbamoyltransferase catalytic subunit (Burkholderia vietnamiensis (strain G4 / LMG 22486) (Burkholderia cepacia (strain R1808))).